The chain runs to 100 residues: Small ribosomal subunit protein uS14c (100 aa).

Belongs to the universal ribosomal protein uS14 family. As to quaternary structure, part of the 30S ribosomal subunit.

The protein resides in the plastid. It is found in the chloroplast. Its function is as follows. Binds 16S rRNA, required for the assembly of 30S particles. The polypeptide is Small ribosomal subunit protein uS14c (Pyropia yezoensis (Susabi-nori)).